The chain runs to 214 residues: 14-3-3 protein homolog 2 (214 aa).

It belongs to the 14-3-3 family.

The protein is 14-3-3 protein homolog 2 of Schistosoma mansoni (Blood fluke).